The primary structure comprises 246 residues: MAGHSKWANIKHRKAAQDAQRGKIFTKLIRELVTAAKIGGGDVAANPRLRSAVDKALSSNMTRDTINRAIERGVGGGDDTNMETKIYEGYGPGGTAVMVECLSDNANRTISQVRPSFTKCGGNLGTEGSVGYLFSKKGLILIANADEDALTEAAIEAGADDIQAQEDGSFEIYTAWEDLGSVRDGIEAAGFNIQEAEVTMIPSTTVDLDAETAPKLLKLIDMLEDCDDVQNVYHNGEISDEVAALL.

Belongs to the TACO1 family.

The protein localises to the cytoplasm. The sequence is that of Probable transcriptional regulatory protein HD_0596 from Haemophilus ducreyi (strain 35000HP / ATCC 700724).